Reading from the N-terminus, the 177-residue chain is ATP synthase subunit delta (177 aa).

Belongs to the ATPase delta chain family. As to quaternary structure, F-type ATPases have 2 components, F(1) - the catalytic core - and F(0) - the membrane proton channel. F(1) has five subunits: alpha(3), beta(3), gamma(1), delta(1), epsilon(1). F(0) has three main subunits: a(1), b(2) and c(10-14). The alpha and beta chains form an alternating ring which encloses part of the gamma chain. F(1) is attached to F(0) by a central stalk formed by the gamma and epsilon chains, while a peripheral stalk is formed by the delta and b chains.

The protein resides in the cell inner membrane. Functionally, f(1)F(0) ATP synthase produces ATP from ADP in the presence of a proton or sodium gradient. F-type ATPases consist of two structural domains, F(1) containing the extramembraneous catalytic core and F(0) containing the membrane proton channel, linked together by a central stalk and a peripheral stalk. During catalysis, ATP synthesis in the catalytic domain of F(1) is coupled via a rotary mechanism of the central stalk subunits to proton translocation. In terms of biological role, this protein is part of the stalk that links CF(0) to CF(1). It either transmits conformational changes from CF(0) to CF(1) or is implicated in proton conduction. The protein is ATP synthase subunit delta of Citrobacter koseri (strain ATCC BAA-895 / CDC 4225-83 / SGSC4696).